The sequence spans 366 residues: Dihydroorotate dehydrogenase (quinone) (366 aa).

Residues 74 to 78 and threonine 98 contribute to the FMN site; that span reads AGFDK. Lysine 78 serves as a coordination point for substrate. A substrate-binding site is contributed by 123-127; it reads NRMGF. Residues asparagine 156 and asparagine 189 each contribute to the FMN site. Position 189 (asparagine 189) interacts with substrate. Residue serine 192 is the Nucleophile of the active site. Position 194 (asparagine 194) interacts with substrate. The FMN site is built by lysine 231 and threonine 259. Position 260–261 (260–261) interacts with substrate; that stretch reads NT. FMN-binding positions include glycine 285, glycine 314, and 335–336; that span reads YT.

The protein belongs to the dihydroorotate dehydrogenase family. Type 2 subfamily. As to quaternary structure, monomer. It depends on FMN as a cofactor.

The protein resides in the cell membrane. The enzyme catalyses (S)-dihydroorotate + a quinone = orotate + a quinol. It functions in the pathway pyrimidine metabolism; UMP biosynthesis via de novo pathway; orotate from (S)-dihydroorotate (quinone route): step 1/1. Functionally, catalyzes the conversion of dihydroorotate to orotate with quinone as electron acceptor. The chain is Dihydroorotate dehydrogenase (quinone) from Kineococcus radiotolerans (strain ATCC BAA-149 / DSM 14245 / SRS30216).